Reading from the N-terminus, the 237-residue chain is Putative N-acetylmannosamine-6-phosphate 2-epimerase (237 aa).

This sequence belongs to the NanE family.

The enzyme catalyses an N-acyl-D-glucosamine 6-phosphate = an N-acyl-D-mannosamine 6-phosphate. Its pathway is amino-sugar metabolism; N-acetylneuraminate degradation; D-fructose 6-phosphate from N-acetylneuraminate: step 3/5. In terms of biological role, converts N-acetylmannosamine-6-phosphate (ManNAc-6-P) to N-acetylglucosamine-6-phosphate (GlcNAc-6-P). In Listeria monocytogenes serovar 1/2a (strain ATCC BAA-679 / EGD-e), this protein is Putative N-acetylmannosamine-6-phosphate 2-epimerase.